The chain runs to 233 residues: 1-(5-phosphoribosyl)-5-[(5-phosphoribosylamino)methylideneamino] imidazole-4-carboxamide isomerase (233 aa).

Residue Asp8 is the Proton acceptor of the active site. The Proton donor role is filled by Asp125.

The protein belongs to the HisA/HisF family.

The protein localises to the cytoplasm. It catalyses the reaction 1-(5-phospho-beta-D-ribosyl)-5-[(5-phospho-beta-D-ribosylamino)methylideneamino]imidazole-4-carboxamide = 5-[(5-phospho-1-deoxy-D-ribulos-1-ylimino)methylamino]-1-(5-phospho-beta-D-ribosyl)imidazole-4-carboxamide. The protein operates within amino-acid biosynthesis; L-histidine biosynthesis; L-histidine from 5-phospho-alpha-D-ribose 1-diphosphate: step 4/9. The chain is 1-(5-phosphoribosyl)-5-[(5-phosphoribosylamino)methylideneamino] imidazole-4-carboxamide isomerase from Thermococcus kodakarensis (strain ATCC BAA-918 / JCM 12380 / KOD1) (Pyrococcus kodakaraensis (strain KOD1)).